A 575-amino-acid polypeptide reads, in one-letter code: Manganese transporter SMF1 (575 aa).

At 1-70 (MVNVGPSHAA…TYVSKRQVMR (70 aa)) the chain is on the extracellular side. Ser-24 is modified (phosphoserine). Residues Lys-33 and Lys-34 each participate in a glycyl lysine isopeptide (Lys-Gly) (interchain with G-Cter in ubiquitin) cross-link. Residues 71-91 (DIFAKYLKFIGPGLMVSVAYI) traverse the membrane as a helical segment. Over 92 to 108 (DPGNYSTAVDAGASNQF) the chain is Cytoplasmic. The chain crosses the membrane as a helical span at residues 109–129 (SLLCIILLSNFIAIFLQCLCI). The Extracellular portion of the chain corresponds to 130 to 156 (KLGSVTGLDLSRACREYLPRWLNWTLY). A helical transmembrane segment spans residues 157 to 177 (FFAECAVIATDIAEVIGTAIA). The Cytoplasmic segment spans residues 178-179 (LN). The helical transmembrane segment at 180 to 200 (ILIKVPLPAGVAITVVDVFLI) threads the bilayer. Residues 201-218 (MFTYKPGASSIRFIRIFE) are Extracellular-facing. The chain crosses the membrane as a helical span at residues 219–239 (CFVAVLVVGVCICFAIELAYI). Over 240–266 (PKSTSVKQVFRGFVPSAQMFDHNGIYT) the chain is Cytoplasmic. The helical transmembrane segment at 267–287 (AISILGATVMPHSLFLGSALV) threads the bilayer. Residues 288 to 344 (QPRLLDYDVKHGNYTVSEEQDKVKKSKSTEEIMEEKYFNYRPTNAAIKYCMKYSMVE) lie on the Extracellular side of the membrane. A helical membrane pass occupies residues 345–365 (LSITLFTLALFVNCAILVVAG). Over 366 to 396 (STLYNSPEADGADLFTIHELLSRNLAPAAGT) the chain is Cytoplasmic. The chain crosses the membrane as a helical span at residues 397 to 417 (IFMLALLLSGQSAGVVCTMSG). Residues 418–463 (QIVSEGHINWKLQPWQRRLATRCISIIPCLVISICIGREALSKALN) are Extracellular-facing. Residues 464-484 (ASQVVLSIVLPFLVAPLIFFT) form a helical membrane-spanning segment. At 485-543 (CKKSIMKTEITVDHTEEDSHNHQNNNDRSAGSVIEQDGSSGMEIENGKDVKIVYMANNW) the chain is on the cytoplasmic side. Residues 498–517 (HTEEDSHNHQNNNDRSAGSV) form a disordered region. Residues 544 to 564 (IITVIAIIVWLFLSLLNVYAI) traverse the membrane as a helical segment. Residues 565 to 575 (VQLGMSHGDIS) lie on the Extracellular side of the membrane.

It belongs to the NRAMP family.

It localises to the cell membrane. The catalysed reaction is Mn(2+)(in) = Mn(2+)(out). In terms of biological role, high-affinity manganese transporter involved in manganese uptake from the extracellular environment. Also contributes to cellular accumulation of other divalent metal ions such as cadmium, cobalt, copper, iron and nickel. The chain is Manganese transporter SMF1 (SMF1) from Saccharomyces cerevisiae (strain ATCC 204508 / S288c) (Baker's yeast).